Reading from the N-terminus, the 872-residue chain is Tetratricopeptide repeat protein 16 (872 aa).

The tract at residues 1–20 is disordered; it reads MTDSDEDALKVDQGPSQDIP. TPR repeat units lie at residues 61 to 94, 96 to 128, 136 to 169, 251 to 284, 285 to 318, 331 to 364, 365 to 398, and 406 to 439; these read VREYYSRGQQCLEQADWETAVLFFSRALHLDPQL, DFYALRAEAYLQLCDFSSAAQNLRRAYSLQQDN, TFVLYLQGQCLFEQCAFLDALNVFSHAAELQPEK, AQQARQDAGILAVQGRLQHALQRINCAIENNPLD, PSFFLFRGTMYRRLQEFDGAVEDFLKVLDMVTED, LLTYNDFAVHCYRQGAYQEGVLLLNKALRDEQQE, KGLYINRGDCFFQLGNLAFAEADYQQALALSPQD, and GLLQEKMGFCEQKHRQFQKAEDHFSTAIRHNPQK. 2 disordered regions span residues 557-640 and 653-872; these read ATPE…ETET and TAMT…YEVL. Acidic residues predominate over residues 577–590; it reads KEEEEKEEEEQKEE. Over residues 591–604 the composition is skewed to basic and acidic residues; the sequence is EEQKKEEKKEEKKP. Polar residues-rich tracts occupy residues 610 to 640, 653 to 675, 689 to 709, and 721 to 754; these read KVASLSESYLDQTSLASSMSFRTTCTSETET, TAMTFSDSSLLKTQSSDSGNNRE, GQRQSLSKTQATQSQRQNFSK, and KTKATQGQGRRSSKTEATQGQRQSSSEIETSQGP. Basic residues predominate over residues 762 to 783; sequence KTTRSPRQRPRKVKAARGRSWR. 2 stretches are compositionally biased toward polar residues: residues 799–827 and 839–861; these read RSSTKTEAFYDSNWSLSKTEDVQGQGQRT and GMSSTSSKAESTWGPSPSVSKTE.

This is Tetratricopeptide repeat protein 16 (TTC16) from Macaca fascicularis (Crab-eating macaque).